The chain runs to 113 residues: Iron-sulfur cluster insertion protein ErpA (113 aa).

3 residues coordinate iron-sulfur cluster: C41, C105, and C107.

Belongs to the HesB/IscA family. In terms of assembly, homodimer. The cofactor is iron-sulfur cluster.

Required for insertion of 4Fe-4S clusters for at least IspG. This is Iron-sulfur cluster insertion protein ErpA from Colwellia psychrerythraea (strain 34H / ATCC BAA-681) (Vibrio psychroerythus).